The primary structure comprises 265 residues: Aquaporin-5 (265 aa).

Over 1-12 (MKKEVCSVAFLK) the chain is Cytoplasmic. Residues 13-33 (AVFAEFLATLIFVFFGLGSAL) traverse the membrane as a helical segment. Residues 34–39 (KWPSAL) are Extracellular-facing. A helical transmembrane segment spans residues 40–60 (PTILQIALAFGLAIGTLAQAL). Topologically, residues 61 to 65 (GPVSG) are cytoplasmic. Residues 66-74 (GHINPAITL) constitute an intramembrane region (discontinuously helical). The short motif at 69–71 (NPA) is the NPA 1 element. At 75–87 (ALLVGNQISLLRA) the chain is on the cytoplasmic side. The helical transmembrane segment at 88 to 108 (FFYVAAQLVGAIAGAGILYGV) threads the bilayer. The Extracellular segment spans residues 109-126 (APLNARGNLAVNALNNNT). 2 N-linked (GlcNAc...) asparagine glycosylation sites follow: Asn-124 and Asn-125. A helical transmembrane segment spans residues 127–147 (TQGQAMVVELILTFQLALCIF). Topologically, residues 148-158 (ASTDSRRTSPV) are cytoplasmic. Residues 159–179 (GSPALSIGLSVTLGHLVGIYF) form a helical membrane-spanning segment. Position 180 (Thr-180) is a topological domain, extracellular. The segment at residues 181–191 (GCSMNPARSFG) is an intramembrane region (discontinuously helical). The short motif at 185 to 187 (NPA) is the NPA 2 element. Topologically, residues 192–203 (PAVVMNRFSPAH) are extracellular. A helical transmembrane segment spans residues 204 to 224 (WVFWVGPIVGAVLAAILYFYL). Over 225–265 (LFPNSLSLSERVAIIKGTYEPDEDWEEQREERKKTMELTTR) the chain is Cytoplasmic.

It belongs to the MIP/aquaporin (TC 1.A.8) family. Homotetramer; each monomer provides an independent water pore. Interacts with TRPV4; the interaction is probably indirect and regulates TRPV4 activation by hypotonicity. In terms of tissue distribution, detected in skin eccrine sweat glands, at the apical cell membrane and at intercellular canaliculi (at protein level).

The protein localises to the apical cell membrane. Its subcellular location is the cell membrane. The protein resides in the cytoplasmic vesicle membrane. It carries out the reaction H2O(in) = H2O(out). Functionally, aquaporins form homotetrameric transmembrane channels, with each monomer independently mediating water transport across the plasma membrane along its osmotic gradient. Plays an important role in fluid secretion in salivary glands. Required for TRPV4 activation by hypotonicity. Together with TRPV4, controls regulatory volume decrease in salivary epithelial cells. Seems to play a redundant role in water transport in the eye, lung and in sweat glands. This Homo sapiens (Human) protein is Aquaporin-5.